Consider the following 178-residue polypeptide: RNA-binding protein (178 aa).

The disordered stretch occupies residues Ser-108–Arg-178. Positions Ser-168–Arg-178 are enriched in basic residues.

It belongs to the phytoreovirus RNA-binding protein family.

Its subcellular location is the host cytoplasm. Its function is as follows. Constituent of viral factories. Binds to ssRNA and dsRNA. This chain is RNA-binding protein, found in Wound tumor virus (strain NJ) (WTV).